We begin with the raw amino-acid sequence, 316 residues long: Protein lifeguard 2 (316 aa).

The tract at residues 1-53 (MTQGKLSVANKAPGTEGQQQVHGEKKEAPAVPSAPPSYEEATSGEGMKAGAFP) is disordered. Helical transmembrane passes span 106–126 (VYTI…LFTF), 138–158 (PGWY…LACC), and 165–185 (FPWN…LTGM). N-linked (GlcNAc...) asparagine glycosylation occurs at asparagine 191. A run of 4 helical transmembrane segments spans residues 194 to 214 (SVLL…VFSF), 225 to 245 (GVLF…AILL), 250 to 270 (VPWL…LFLA), and 290 to 310 (IFGA…FLQL).

This sequence belongs to the BI1 family. LFG subfamily. As to quaternary structure, interacts with FAS/TNFRSF6 and BAX. Highly expressed in breast carcinoma tissues. Enhanced expression correlates with the grade of the tumor (grade II/grade III) in primary breast tumors (at protein level). Widely expressed. Expressed at high levels in the brain especially in the hippocampus.

It localises to the cell membrane. Its subcellular location is the membrane raft. It is found in the postsynaptic cell membrane. In terms of biological role, antiapoptotic protein which protects cells uniquely from Fas-induced apoptosis. Regulates Fas-mediated apoptosis in neurons by interfering with caspase-8 activation. May play a role in cerebellar development by affecting cerebellar size, internal granular layer (IGL) thickness, and Purkinje cell (PC) development. The chain is Protein lifeguard 2 (FAIM2) from Homo sapiens (Human).